We begin with the raw amino-acid sequence, 295 residues long: Pyridoxal 5'-phosphate synthase subunit PdxS (295 aa).

D-ribose 5-phosphate is bound at residue D25. K82 functions as the Schiff-base intermediate with D-ribose 5-phosphate in the catalytic mechanism. G154 contributes to the D-ribose 5-phosphate binding site. D-glyceraldehyde 3-phosphate is bound at residue R166. D-ribose 5-phosphate-binding positions include G215 and 236-237 (GS).

It belongs to the PdxS/SNZ family. In terms of assembly, in the presence of PdxT, forms a dodecamer of heterodimers.

It carries out the reaction aldehydo-D-ribose 5-phosphate + D-glyceraldehyde 3-phosphate + L-glutamine = pyridoxal 5'-phosphate + L-glutamate + phosphate + 3 H2O + H(+). Its pathway is cofactor biosynthesis; pyridoxal 5'-phosphate biosynthesis. In terms of biological role, catalyzes the formation of pyridoxal 5'-phosphate from ribose 5-phosphate (RBP), glyceraldehyde 3-phosphate (G3P) and ammonia. The ammonia is provided by the PdxT subunit. Can also use ribulose 5-phosphate and dihydroxyacetone phosphate as substrates, resulting from enzyme-catalyzed isomerization of RBP and G3P, respectively. This Bacillus anthracis (strain A0248) protein is Pyridoxal 5'-phosphate synthase subunit PdxS.